A 1493-amino-acid chain; its full sequence is Son of sevenless homolog (1493 aa).

The DH domain occupies 244-448 (TYESVAVDFL…ERVVGCVSDM (205 aa)). In terms of domain architecture, PH spans 496–606 (ELEKDGDLGM…WMAVLVKVTT (111 aa)). The N-terminal Ras-GEF domain maps to 656 to 824 (GIPVIKCGTV…TILALIEKRV (169 aa)). The Ras-GEF domain maps to 897–1164 (HPIEIGRQLT…YNKSLEIQPK (268 aa)). Disordered stretches follow at residues 1067 to 1091 (KSPP…DPEN), 1165 to 1248 (GLDT…DDAP), and 1263 to 1493 (HPKI…SSNK). Positions 1079-1088 (QQKDDLKASD) are enriched in basic and acidic residues. 2 stretches are compositionally biased toward polar residues: residues 1208-1231 (HSQN…NTPL) and 1279-1289 (SRANQSNSVSL). A compositionally biased stretch (low complexity) spans 1308–1326 (STATSPTTLTTTTTPSSAG). Residues 1350–1361 (LTPSRDNSSPSA) are compositionally biased toward polar residues. Positions 1381–1400 (STSSDVSSSPSTSGSTSSAT) are enriched in low complexity. Over residues 1402–1417 (ENQEQLRVIFDREESH) the composition is skewed to basic and acidic residues. Over residues 1426 to 1435 (PLPPALPPPR) the composition is skewed to pro residues. Residues 1453-1464 (HNSNSPTLSSEQ) show a composition bias toward polar residues.

As to quaternary structure, interacts with cmd-1 in the presence of Ca(2+).

In terms of biological role, promotes the exchange of Ras-bound GDP by GTP. May regulate signaling pathways downstream of receptor tyrosine kinase, egl-15 and let-23. Required for larval and male spicule development, fluid homeostasis, vulva induction, spermatogenesis, and oogenesis by promoting meiosis prophase exit during oocyte maturation. Required for the delamination of G1 cell by promoting the loss of cell junctions and detachment from the excretory system during larval development. Plays a role in nicotinic acetylcholine receptor (nAChR)-mediated sensitivity to nicotine. Regulates synaptic levels of nAchR subunit lev-1 in the nerve cord. This Caenorhabditis elegans protein is Son of sevenless homolog.